A 447-amino-acid polypeptide reads, in one-letter code: MGCVASTGNYENEDDPFIQNKRANDLIEQNLQQERNKNKNEVKLLLLGAGESGKSTVLKQMKLLHQGGFTHRERMQYGQVIWADAIESMRTLILQAGKLGIELDSDLKNAHSGQLVNTELHQCKEKIFRANTLDQIDARMAGGSEFLNEYVLKYNGIGSKKKRQTTLGFKESNGADPEEEDETDAFLSEKLAGTSYTGSSETSELKRIDQSTNEEIAYAIKKLWTQDKGIRQCFNRSSEFQLEGSASYYFDNIEKFARVDYVCDDMDILKGRIKTTGITENSFKIGPSTFKVYDAGGQRSERRKWIHCFEGITAVVFVIAISEYDQMLFEDERVNRMHESIVLLDTLLNSRWFANTPFILFLNKVDIFQEKVKRSPIRTWFPNYPGKLGDSETGLKYFESLFLSLNRSNKPIYVHRTCATDTQSMRFVLGAVTDLVIQQNLKKSGIL.

Gly-2 carries N-myristoyl glycine lipidation. A lipid anchor (S-palmitoyl cysteine) is attached at Cys-3. The region spanning 40 to 447 is the G-alpha domain; sequence NEVKLLLLGA…QQNLKKSGIL (408 aa). Residues 43–56 are G1 motif; it reads KLLLLGAGESGKST. GTP contacts are provided by Glu-51, Ser-52, Gly-53, Lys-54, Ser-55, Thr-56, Leu-269, Thr-275, Gly-297, Asn-363, Lys-364, Asp-366, and Ala-419. Ser-55 is a binding site for Mg(2+). The tract at residues 267–275 is G2 motif; that stretch reads DILKGRIKT. Position 275 (Thr-275) interacts with Mg(2+). The segment at 290–299 is G3 motif; that stretch reads FKVYDAGGQR. The interval 359–366 is G4 motif; sequence ILFLNKVD. A G5 motif region spans residues 417-422; the sequence is TCATDT.

Belongs to the G-alpha family. As to quaternary structure, g proteins are composed of 3 units; alpha, beta and gamma. The alpha chain contains the guanine nucleotide binding site. It depends on Mg(2+) as a cofactor.

In terms of biological role, guanine nucleotide-binding proteins (G proteins) are involved as modulators or transducers in various transmembrane signaling systems. This protein is involved in the mating response pathway. This is Guanine nucleotide-binding protein alpha-1 subunit (GPA1) from Kluyveromyces lactis (strain ATCC 8585 / CBS 2359 / DSM 70799 / NBRC 1267 / NRRL Y-1140 / WM37) (Yeast).